The primary structure comprises 168 residues: MTRRREKAVQPVGTRRAAREFVFRVLFEADRGDLPLDTVFTRAEGAMREGDDTFPQLSADALTFANELVRGLEKHRADIDTTLRRTIRGWSFDQMAQTDLNVLRLATFELIYTAEPHPPVIESAVRIARKFGGDDSGRFVNGVLAGLSRSLQSAGVAKADEQADTAQD.

The protein belongs to the NusB family.

Its function is as follows. Involved in transcription antitermination. Required for transcription of ribosomal RNA (rRNA) genes. Binds specifically to the boxA antiterminator sequence of the ribosomal RNA (rrn) operons. The polypeptide is Transcription antitermination protein NusB (Deinococcus deserti (strain DSM 17065 / CIP 109153 / LMG 22923 / VCD115)).